A 119-amino-acid chain; its full sequence is Basic phospholipase A2 notechis II-5 (119 aa).

Disulfide bonds link Cys-11–Cys-71, Cys-27–Cys-118, Cys-29–Cys-45, Cys-44–Cys-99, Cys-51–Cys-92, Cys-60–Cys-85, and Cys-78–Cys-90. The Ca(2+) site is built by Tyr-28, Gly-30, and Gly-32. His-48 is an active-site residue. Ca(2+) is bound at residue Asp-49. Residue Asp-93 is part of the active site.

It belongs to the phospholipase A2 family. Group I subfamily. D49 sub-subfamily. Ca(2+) serves as cofactor. In terms of tissue distribution, expressed by the venom gland.

It localises to the secreted. The catalysed reaction is a 1,2-diacyl-sn-glycero-3-phosphocholine + H2O = a 1-acyl-sn-glycero-3-phosphocholine + a fatty acid + H(+). In terms of biological role, snake venom phospholipase A2 (PLA2) that inhibits neuromuscular transmission by blocking acetylcholine release from the nerve termini. Notechis II-5 is less toxic than notexin but has a higher specific phospholipase activity. PLA2 catalyzes the calcium-dependent hydrolysis of the 2-acyl groups in 3-sn-phosphoglycerides. The sequence is that of Basic phospholipase A2 notechis II-5 from Notechis scutatus scutatus (Mainland tiger snake).